Consider the following 375-residue polypeptide: Delta(9) fatty acid conjugase-like enzyme (375 aa).

2 helical membrane passes run 38 to 58 (LSLSFYYLFYDLIKVCILFYV) and 66 to 86 (LPYSLSCIVWPLYWFFQGAFL). The Histidine box-1 signature appears at 94-98 (HECGH). Positions 130–134 (HRNHH) match the Histidine box-2 motif. Helical transmembrane passes span 168–188 (FGLVVNMVFELTFGYPSYLIF), 219–239 (VFFSDVGICIVLYALYRIAIA), and 241–261 (GAMLVLYVYGLPWVVMSAFIF). The Histidine box-3 motif lies at 307–311 (HVVHH).

Belongs to the fatty acid desaturase type 1 family.

The protein localises to the membrane. Its function is as follows. Involved in the biosynthesis of dimorphecolic acid (9-OH-18:2(10E,12E)). Catalyzes the formation of the C-9 hydroxyl group and the (E)-delta(10) double bond from the trans-linoleic acid (16:2(9Z,12E)) produced by FAD2-1. Very limited activity with cis-linoleic acid (16:2(9Z,12Z)). This Dimorphotheca sinuata (African daisy) protein is Delta(9) fatty acid conjugase-like enzyme.